The following is a 180-amino-acid chain: Inner membrane-spanning protein YciB (180 aa).

5 helical membrane passes run 10–30 (IIAFFVFYKLADIYVATGVLM), 47–67 (ITTRHWVILAVVMLFGAVTLL), 74–94 (IKMKVSVVYVAIALMLLGGLI), 121–141 (YAWIIFCLALAAVNLYIAEFW), and 151–171 (VFGILGISLVFTIGTGFYMYH).

It belongs to the YciB family.

It localises to the cell inner membrane. Plays a role in cell envelope biogenesis, maintenance of cell envelope integrity and membrane homeostasis. In Idiomarina loihiensis (strain ATCC BAA-735 / DSM 15497 / L2-TR), this protein is Inner membrane-spanning protein YciB.